The primary structure comprises 154 residues: 17 kDa surface antigen (154 aa).

The first 19 residues, 1–19 (MKLLSKIMIIALAASMLQA), serve as a signal peptide directing secretion. The N-palmitoyl cysteine moiety is linked to residue Cys-20. Cys-20 carries S-diacylglycerol cysteine lipidation.

The protein belongs to the rickettsiale 17 kDa surface antigen family.

The protein localises to the cell outer membrane. This Rickettsia rhipicephali protein is 17 kDa surface antigen (omp).